The following is a 170-amino-acid chain: Cilia- and flagella-associated protein 276 (170 aa).

Disordered regions lie at residues 1-37 (MPLTRDPFQNPALDKDDSYLGKSRASKKLPYKNPTHL) and 151-170 (HTAATNGGYSRKNDGGFFST).

In terms of assembly, microtubule inner protein component of sperm flagellar doublet microtubules. As to expression, expressed in trachea multiciliated cells.

It localises to the cytoplasm. The protein resides in the cytoskeleton. It is found in the cilium axoneme. Its subcellular location is the flagellum axoneme. In terms of biological role, microtubule inner protein (MIP) part of the dynein-decorated doublet microtubules (DMTs) in cilia axoneme, which is required for motile cilia beating. May play an important role for the maintenance of myelin-axon integrity. May affect intracellular Ca(2+) homeostasis. The polypeptide is Cilia- and flagella-associated protein 276 (Bos taurus (Bovine)).